The primary structure comprises 239 residues: MLIEDDTGFVLHARAYRETSLLVEVLSAQHGRIGVLARGVSTAKGQVLRAALQPLQWIRFSALQRGELAQLRGAEALDAAPRLVGQAMLAGFYLSELTLRLAPRQDPLPELYLAYGEARARLGVGAGLAWTLRRFERELLTSLGLGFELDSASDGQPIDPAARYELDPQEGAQRLLSERAGERRAAATGSALLALAADEEPDAADLASLRLPMRRVLAHHLGPRGLKSWEMLEQLAPKR.

The protein belongs to the RecO family.

Involved in DNA repair and RecF pathway recombination. The sequence is that of DNA repair protein RecO from Stenotrophomonas maltophilia (strain R551-3).